The primary structure comprises 386 residues: GTPase Obg (386 aa).

The Obg domain maps to 1 to 159 (MKFVDEASIL…RELLLELMLL (159 aa)). A disordered region spans residues 127 to 147 (NTRFKSSVNRTPRQKTNGTPG). A compositionally biased stretch (polar residues) spans 129–145 (RFKSSVNRTPRQKTNGT). The OBG-type G domain occupies 160–333 (ADVGMLGMPN…LCWDVMTFII (174 aa)). Residues 166–173 (GMPNAGKS), 191–195 (FTTLV), 213–216 (DIPG), 283–286 (NKID), and 314–316 (SAA) each bind GTP. Positions 173 and 193 each coordinate Mg(2+).

This sequence belongs to the TRAFAC class OBG-HflX-like GTPase superfamily. OBG GTPase family. In terms of assembly, monomer. Mg(2+) serves as cofactor.

Its subcellular location is the cytoplasm. In terms of biological role, an essential GTPase which binds GTP, GDP and possibly (p)ppGpp with moderate affinity, with high nucleotide exchange rates and a fairly low GTP hydrolysis rate. Plays a role in control of the cell cycle, stress response, ribosome biogenesis and in those bacteria that undergo differentiation, in morphogenesis control. This is GTPase Obg from Escherichia coli (strain UTI89 / UPEC).